The following is a 109-amino-acid chain: Large ribosomal subunit protein uL22 (109 aa).

Belongs to the universal ribosomal protein uL22 family. Part of the 50S ribosomal subunit.

In terms of biological role, this protein binds specifically to 23S rRNA; its binding is stimulated by other ribosomal proteins, e.g. L4, L17, and L20. It is important during the early stages of 50S assembly. It makes multiple contacts with different domains of the 23S rRNA in the assembled 50S subunit and ribosome. Functionally, the globular domain of the protein is located near the polypeptide exit tunnel on the outside of the subunit, while an extended beta-hairpin is found that lines the wall of the exit tunnel in the center of the 70S ribosome. The polypeptide is Large ribosomal subunit protein uL22 (Cupriavidus metallidurans (strain ATCC 43123 / DSM 2839 / NBRC 102507 / CH34) (Ralstonia metallidurans)).